A 71-amino-acid chain; its full sequence is Pro-MCH (71 aa).

Positions 1–20 (AKMNLSSYILILTFSLFSQG) are cleaved as a signal peptide.

It belongs to the melanin-concentrating hormone family.

The protein localises to the secreted. This is Pro-MCH (PMCH) from Pan paniscus (Pygmy chimpanzee).